The following is a 216-amino-acid chain: Sperm microtubule inner protein 8 (216 aa).

In terms of assembly, microtubule inner protein component of sperm flagellar doublet microtubules. As to expression, expressed in sperm.

It is found in the cytoplasm. The protein localises to the cytoskeleton. It localises to the flagellum axoneme. Microtubule inner protein (MIP) part of the dynein-decorated doublet microtubules (DMTs) in flagellum axoneme. May serve to reinforce and thus stabilize the microtubule structure in the sperm flagella. This is Sperm microtubule inner protein 8 (SPMIP8) from Bos taurus (Bovine).